The following is a 92-amino-acid chain: Small ribosomal subunit protein uS19 (92 aa).

The protein belongs to the universal ribosomal protein uS19 family.

Protein S19 forms a complex with S13 that binds strongly to the 16S ribosomal RNA. This is Small ribosomal subunit protein uS19 (rpsS) from Synechocystis sp. (strain ATCC 27184 / PCC 6803 / Kazusa).